Here is a 252-residue protein sequence, read N- to C-terminus: Fatty acid elongase 4 (252 aa).

The chain crosses the membrane as a helical span at residues 25–45 (LVSWHALVLGHLLYLFVVFVM). Asn56 carries N-linked (GlcNAc...) asparagine glycosylation. Residues 60 to 80 (VLVVYNVLQICLSAAMAINLS) traverse the membrane as a helical segment. N-linked (GlcNAc...) asparagine glycosylation is present at Asn89. Transmembrane regions (helical) follow at residues 100–120 (FWMF…VFIL), 127–147 (QLSF…GILL), 150–170 (GLAN…HFLM), 187–207 (FLLT…AILV), and 214–234 (FTLG…VLFL). The HxxHH motif signature appears at 132 to 136 (HVYHH). The active-site Nucleophile is His135.

Belongs to the ELO family.

It is found in the membrane. The enzyme catalyses (5Z,8Z,11Z,14Z)-eicosatetraenoyl-CoA + malonyl-CoA + H(+) = (7Z,10Z,13Z,16Z)-3-oxodocosatetraenoyl-CoA + CO2 + CoA. The protein operates within lipid metabolism; fatty acid biosynthesis. Functionally, involved in the synthesis of fatty acids. Elongates arachidonate and other C20 polyunsaturated fatty acids (PUFAs) with a preference for n-6 PUFAs. Not involved in fatty acid synthesis up to C18. In Trypanosoma brucei brucei (strain 927/4 GUTat10.1), this protein is Fatty acid elongase 4.